The following is a 359-amino-acid chain: Peptide chain release factor 1 (359 aa).

Residue Gln-235 is modified to N5-methylglutamine. The disordered stretch occupies residues 283–305; that stretch reads QKAESERSASRKTQVGSGDRSER.

The protein belongs to the prokaryotic/mitochondrial release factor family. Methylated by PrmC. Methylation increases the termination efficiency of RF1.

Its subcellular location is the cytoplasm. Functionally, peptide chain release factor 1 directs the termination of translation in response to the peptide chain termination codons UAG and UAA. The polypeptide is Peptide chain release factor 1 (Bartonella bacilliformis (strain ATCC 35685 / KC583 / Herrer 020/F12,63)).